A 468-amino-acid chain; its full sequence is UDP-N-acetylmuramate--L-alanine ligase (468 aa).

Residue 122–128 coordinates ATP; that stretch reads GSHGKTT.

The protein belongs to the MurCDEF family.

The protein localises to the cytoplasm. The enzyme catalyses UDP-N-acetyl-alpha-D-muramate + L-alanine + ATP = UDP-N-acetyl-alpha-D-muramoyl-L-alanine + ADP + phosphate + H(+). It functions in the pathway cell wall biogenesis; peptidoglycan biosynthesis. Functionally, cell wall formation. The sequence is that of UDP-N-acetylmuramate--L-alanine ligase from Synechococcus sp. (strain CC9902).